A 727-amino-acid chain; its full sequence is YTH domain-containing protein 1 (727 aa).

Residues 1 to 12 (MAADSREEKDGE) are compositionally biased toward basic and acidic residues. Positions 1–338 (MAADSREEKD…KHEKLSSSVR (338 aa)) are disordered. Ser35 bears the Phosphoserine mark. A compositionally biased stretch (basic and acidic residues) spans 50 to 59 (DRMESTDTKR). Positions 63 to 90 (SVHSRQLVSKPLSSSVSNNKRIVSTKGK) are enriched in polar residues. A compositionally biased stretch (basic and acidic residues) spans 91–115 (SATEYKNEEYQRSERNKRLDADRKI). A Glycyl lysine isopeptide (Lys-Gly) (interchain with G-Cter in SUMO2) cross-link involves residue Lys96. Ser118 and Ser120 each carry phosphoserine. Residues 124–144 (EPYKNQPEKTCVRKRDPERRA) show a composition bias toward basic and acidic residues. Residue Ser146 is modified to Phosphoserine. Position 148 is a phosphothreonine (Thr148). 2 stretches are compositionally biased toward basic and acidic residues: residues 151–163 (GSER…DRRA) and 170–185 (SKEE…DHET). Residues 199 to 254 (ENEEEGVEEDVEEDEEVEEDAEEDEEVDEDGEEEEEEEEEEEEEEEEEEEEYEQDE) show a composition bias toward acidic residues. Residues 255–270 (RDQKEEGNDYDTRSEA) are compositionally biased toward basic and acidic residues. Residues 280-289 (FTDGSVRSGS) are compositionally biased toward polar residues. Phosphoserine occurs at positions 308, 315, 317, 318, and 320. Residues 315 to 325 (SGSSASESYAG) show a composition bias toward low complexity. A YTH domain is found at 355–492 (ARFFLIKSNN…ECGTQLCLLF (138 aa)). RNA-binding positions include 361 to 363 (KSN) and 377 to 378 (WS). Residue Ser424 is modified to Phosphoserine. Trp428 contributes to the RNA binding site. Ser435 carries the post-translational modification Phosphoserine. RNA is bound at residue Asp476. Positions 508–523 (RHKRRMHSQPRSRGRP) are enriched in basic residues. Disordered stretches follow at residues 508–564 (RHKR…PGYL), 607–643 (GMPP…HPVP), and 669–727 (AVVS…RYRR). Residues 524-564 (SRREPVRDVGRRRPEDYDIHNSRKKPRIDYPPEFHQRPGYL) are compositionally biased toward basic and acidic residues. At Ser545 the chain carries Phosphoserine. The segment covering 679 to 727 (RERDRERERDRPRDNRRDRERDRGRDRERERERLCDRDRDRGERGRYRR) has biased composition (basic and acidic residues).

As to quaternary structure, interacts with SRSF1. Interacts with SRSF2. Interacts with SRSF3. Interacts with SRSF7. Interacts with SRSF10. Interacts with CPSF6. Interacts with KHDRBS1/SAM68. Interacts with TRA2B. Interacts with KHDRBS3. Interacts with EMD. Interacts with RBMX. Interacts with ZCCHC8. In terms of processing, tyrosine phosphorylated.

It is found in the nucleus. The protein resides in the nucleus speckle. In terms of biological role, regulator of alternative splicing that specifically recognizes and binds N6-methyladenosine (m6A)-containing RNAs. M6A is a modification present at internal sites of mRNAs and some non-coding RNAs and plays a role in the efficiency of mRNA splicing, processing and stability. Acts as a key regulator of exon-inclusion or exon-skipping during alternative splicing via interaction with mRNA splicing factors SRSF3 and SRSF10. Specifically binds m6A-containing mRNAs and promotes recruitment of SRSF3 to its mRNA-binding elements adjacent to m6A sites, leading to exon-inclusion during alternative splicing. In contrast, interaction with SRSF3 prevents interaction with SRSF10, a splicing factor that promotes exon skipping: this prevents SRSF10 from binding to its mRNA-binding sites close to m6A-containing regions, leading to inhibit exon skipping during alternative splicing. May also regulate alternative splice site selection. Also involved in nuclear export of m6A-containing mRNAs via interaction with SRSF3: interaction with SRSF3 facilitates m6A-containing mRNA-binding to both SRSF3 and NXF1, promoting mRNA nuclear export. Involved in S-adenosyl-L-methionine homeostasis by regulating expression of MAT2A transcripts, probably by binding m6A-containing MAT2A mRNAs. Also recognizes and binds m6A on other RNA molecules. Involved in random X inactivation mediated by Xist RNA: recognizes and binds m6A-containing Xist and promotes transcription repression activity of Xist. Also recognizes and binds m6A-containing single-stranded DNA. Involved in germline development: required for spermatogonial development in males and oocyte growth and maturation in females, probably via its role in alternative splicing. The protein is YTH domain-containing protein 1 of Homo sapiens (Human).